Reading from the N-terminus, the 707-residue chain is tRNA 5-methylaminomethyl-2-thiouridine biosynthesis bifunctional protein MnmC (707 aa).

The tRNA (mnm(5)s(2)U34)-methyltransferase stretch occupies residues methionine 1–glutamate 264. Positions isoleucine 312–isoleucine 707 are FAD-dependent cmnm(5)s(2)U34 oxidoreductase.

The protein in the N-terminal section; belongs to the methyltransferase superfamily. tRNA (mnm(5)s(2)U34)-methyltransferase family. In the C-terminal section; belongs to the DAO family. It depends on FAD as a cofactor.

It localises to the cytoplasm. It catalyses the reaction 5-aminomethyl-2-thiouridine(34) in tRNA + S-adenosyl-L-methionine = 5-methylaminomethyl-2-thiouridine(34) in tRNA + S-adenosyl-L-homocysteine + H(+). In terms of biological role, catalyzes the last two steps in the biosynthesis of 5-methylaminomethyl-2-thiouridine (mnm(5)s(2)U) at the wobble position (U34) in tRNA. Catalyzes the FAD-dependent demodification of cmnm(5)s(2)U34 to nm(5)s(2)U34, followed by the transfer of a methyl group from S-adenosyl-L-methionine to nm(5)s(2)U34, to form mnm(5)s(2)U34. This is tRNA 5-methylaminomethyl-2-thiouridine biosynthesis bifunctional protein MnmC from Saccharophagus degradans (strain 2-40 / ATCC 43961 / DSM 17024).